The primary structure comprises 200 residues: MVVNILLFITLIFLLLLFVFLIAFAFLNKRVRNYVVRTWTSVFSKSKQNLDKKNFFDNLTSTLLRLSVDKIGAIIAIEKRDSLDPYINIGYRVSSDFSPELLVTIFYNKSSPLHDGAVIVRDYKIISVSSYFPMTRQLIDVSYGSRHRSALGLSEKSDAVVFIVSETTGKISVALKGVIKTLSSNSDRLQDEIIHYLSSK.

The chain crosses the membrane as a helical span at residues 5–25; that stretch reads ILLFITLIFLLLLFVFLIAFA. Residues 28 to 185 form the DAC domain; that stretch reads NKRVRNYVVR…KGVIKTLSSN (158 aa).

This sequence belongs to the adenylate cyclase family. DacB/CdaS subfamily. In terms of assembly, probably oligomerizes.

It localises to the cell membrane. It carries out the reaction 2 ATP = 3',3'-c-di-AMP + 2 diphosphate. Its function is as follows. Catalyzes the condensation of 2 ATP molecules into cyclic di-AMP (c-di-AMP), a second messenger used to regulate differing processes in different bacteria. In Mycoplasma genitalium (strain ATCC 33530 / DSM 19775 / NCTC 10195 / G37) (Mycoplasmoides genitalium), this protein is Diadenylate cyclase.